The sequence spans 1228 residues: Multimerin-1 (1228 aa).

The signal sequence occupies residues 1–19 (MKGARLFVLLSSLWSGGIG). The N-linked (GlcNAc...) asparagine glycan is linked to Asn-21. Residues 68–98 (TPEARTSEDSLLKSTLPPSETSAPAEGVRNQ) form a disordered region. The segment covering 79–89 (LKSTLPPSETS) has biased composition (polar residues). Asn-97, Asn-114, and Asn-120 each carry an N-linked (GlcNAc...) asparagine glycan. A glycan (N-linked (GlcNAc...) (complex) asparagine) is linked at Asn-136. The disordered stretch occupies residues 157 to 200 (NTVGGTGGIGGVGGTGGVGNRAPRETYLSRGDSSSSQRTDYQKS). Over residues 160 to 175 (GGTGGIGGVGGTGGVG) the composition is skewed to gly residues. The Cell attachment site motif lies at 186–188 (RGD). The span at 187 to 200 (GDSSSSQRTDYQKS) shows a compositional bias: polar residues. The 76-residue stretch at 207-282 (GKNWCAYVHT…PGYSGPKCQL (76 aa)) folds into the EMI domain. Intrachain disulfides connect Cys-211/Cys-272, Cys-238/Cys-245, and Cys-271/Cys-280. Residue Thr-216 is glycosylated (O-linked (Fuc) threonine). Thr-265 is a glycosylation site (O-linked (Fuc) threonine). Coiled coils occupy residues 333-365 (MKLTLLQKKIDNISLTVNDVRNTYSSLEGKVSE) and 400-430 (NDMQETVAQLFKTVSSLSEDLESTRQIIQKV). Asn-344 carries N-linked (GlcNAc...) asparagine glycosylation. 16 N-linked (GlcNAc...) asparagine glycosylation sites follow: Asn-431, Asn-507, Asn-541, Asn-576, Asn-618, Asn-680, Asn-729, Asn-783, Asn-816, Asn-828, Asn-840, Asn-921, Asn-933, Asn-942, Asn-981, and Asn-1020. Positions 503–523 (YESLNKTLSKLKEVHEQLLST) form a coiled coil. Coiled-coil stretches lie at residues 580-650 (SLEM…EILQ) and 675-726 (RKKI…EMED). Positions 819-869 (NFQKMYQMFNETTSQVRKYQQNMSHLEEKLLLTTKISKNFETRLQDIESKV) form a coiled coil. The EGF-like domain occupies 1041 to 1077 (EYSSCSRHPCQNGGTCINGRTSFTCACRHPFTGDNCT). 3 disulfide bridges follow: Cys-1045–Cys-1056, Cys-1050–Cys-1065, and Cys-1067–Cys-1076. Thr-1055 carries an O-linked (Fuc) threonine glycan. N-linked (GlcNAc...) asparagine glycosylation occurs at Asn-1075. A C1q domain is found at 1096–1228 (RYAPMVAFFA…TFSGYLLYRT (133 aa)).

In terms of assembly, multimeric. Composed of varying sized, disulfide-linked multimers, the smallest of which is a homotrimer. Proteolysis of the promultimerin in the N-terminal region, leads to the mature p155 form that is stored in platelets. Interacts with factor V/Va. The N-terminus is blocked. Post-translationally, extensively N-glycosylated. In terms of processing, O-fucosylated within the EMI domain (at Thr-216 and Thr-265) by FUT10/POFUT3 and FUT11/POFUT4. O-fucosylation at Thr-216 and Thr-1055 are required for facilitating protein folding and secretion. Synthesized by endothelial cells and megakaryocytes. Stored in platelet alpha granules and endothelial cell Weibel-Palade bodies, following activation of these cells, it is released and attached to megakaryocytes, platelets, endothelium and subendothelium of blood vessels. Not found in plasma. Found in vascular tissues such as placenta, lung, and liver.

It localises to the secreted. Its function is as follows. Carrier protein for platelet (but not plasma) factor V/Va. Plays a role in the storage and stabilization of factor V in platelets. Upon release following platelet activation, may limit platelet and plasma factor Va-dependent thrombin generation. Ligand for integrin alpha-IIb/beta-3 and integrin alpha-V/beta-3 on activated platelets, and may function as an extracellular matrix or adhesive protein. This is Multimerin-1 (MMRN1) from Homo sapiens (Human).